The sequence spans 461 residues: 23S rRNA (uracil(1939)-C(5))-methyltransferase RlmD (461 aa).

Residues 1-26 form a disordered region; it reads MAKHERGLRFQPTGGSKAPQIPTGKK. Residues 20 to 78 enclose the TRAM domain; sequence QIPTGKKQRLSIERLANDGRGIAFFEGKTWFVLGALAGEEVEARVLGAHGKVVEARTER. [4Fe-4S] cluster-binding residues include Cys91, Cys97, Cys100, and Cys179. S-adenosyl-L-methionine is bound by residues Gln283, Phe312, Asn317, Glu333, Asp360, and Asp381. The Nucleophile role is filled by Cys407.

The protein belongs to the class I-like SAM-binding methyltransferase superfamily. RNA M5U methyltransferase family. RlmD subfamily.

The enzyme catalyses uridine(1939) in 23S rRNA + S-adenosyl-L-methionine = 5-methyluridine(1939) in 23S rRNA + S-adenosyl-L-homocysteine + H(+). Its function is as follows. Catalyzes the formation of 5-methyl-uridine at position 1939 (m5U1939) in 23S rRNA. This chain is 23S rRNA (uracil(1939)-C(5))-methyltransferase RlmD, found in Pseudomonas fluorescens (strain Pf0-1).